Reading from the N-terminus, the 177-residue chain is ATP synthase subunit delta (177 aa).

It belongs to the ATPase delta chain family. In terms of assembly, F-type ATPases have 2 components, F(1) - the catalytic core - and F(0) - the membrane proton channel. F(1) has five subunits: alpha(3), beta(3), gamma(1), delta(1), epsilon(1). F(0) has three main subunits: a(1), b(2) and c(10-14). The alpha and beta chains form an alternating ring which encloses part of the gamma chain. F(1) is attached to F(0) by a central stalk formed by the gamma and epsilon chains, while a peripheral stalk is formed by the delta and b chains.

Its subcellular location is the cell inner membrane. F(1)F(0) ATP synthase produces ATP from ADP in the presence of a proton or sodium gradient. F-type ATPases consist of two structural domains, F(1) containing the extramembraneous catalytic core and F(0) containing the membrane proton channel, linked together by a central stalk and a peripheral stalk. During catalysis, ATP synthesis in the catalytic domain of F(1) is coupled via a rotary mechanism of the central stalk subunits to proton translocation. Functionally, this protein is part of the stalk that links CF(0) to CF(1). It either transmits conformational changes from CF(0) to CF(1) or is implicated in proton conduction. In Shewanella oneidensis (strain ATCC 700550 / JCM 31522 / CIP 106686 / LMG 19005 / NCIMB 14063 / MR-1), this protein is ATP synthase subunit delta.